Reading from the N-terminus, the 581-residue chain is Pyridine nucleotide-disulfide oxidoreductase domain-containing protein 2 (581 aa).

38–71 (VVIGAGHNGLVAAAYLQRLGVNTAVFERRHVIGG) is a binding site for FAD.

The protein belongs to the carotenoid/retinoid oxidoreductase family. Interacts with COX5B; this interaction may contribute to localize PYROXD2 to the inner face of the inner mitochondrial membrane.

The protein resides in the mitochondrion matrix. Probable oxidoreductase that may play a role as regulator of mitochondrial function. This is Pyridine nucleotide-disulfide oxidoreductase domain-containing protein 2 from Homo sapiens (Human).